We begin with the raw amino-acid sequence, 290 residues long: ATP synthase gamma chain (290 aa).

This sequence belongs to the ATPase gamma chain family. F-type ATPases have 2 components, CF(1) - the catalytic core - and CF(0) - the membrane proton channel. CF(1) has five subunits: alpha(3), beta(3), gamma(1), delta(1), epsilon(1). CF(0) has three main subunits: a, b and c.

The protein localises to the cell membrane. Functionally, produces ATP from ADP in the presence of a proton gradient across the membrane. The gamma chain is believed to be important in regulating ATPase activity and the flow of protons through the CF(0) complex. The protein is ATP synthase gamma chain of Roseiflexus sp. (strain RS-1).